The chain runs to 136 residues: FK506-binding protein 2 (136 aa).

An N-terminal signal peptide occupies residues 1–17; that stretch reads MLSQIWILFTFMVCVIA. A PPIase FKBP-type domain is found at 45–134; the sequence is GDMVSVHYTG…DFDVELVDIA (90 aa).

It belongs to the FKBP-type PPIase family. FKBP2 subfamily.

The protein localises to the endoplasmic reticulum. It catalyses the reaction [protein]-peptidylproline (omega=180) = [protein]-peptidylproline (omega=0). Its activity is regulated as follows. Inhibited by both FK506 and rapamycin. Its function is as follows. PPIases accelerate the folding of proteins. It catalyzes the cis-trans isomerization of proline imidic peptide bonds in oligopeptides. In Candida glabrata (strain ATCC 2001 / BCRC 20586 / JCM 3761 / NBRC 0622 / NRRL Y-65 / CBS 138) (Yeast), this protein is FK506-binding protein 2 (FPR2).